We begin with the raw amino-acid sequence, 564 residues long: 4-coumarate--CoA ligase 1 (564 aa).

ATP-binding residues include Ser-209, Ser-210, Gly-211, Thr-212, Thr-213, and Lys-217. Tyr-259 and Thr-263 together coordinate (E)-4-coumaroyl-AMP. Residue Arg-280 coordinates CoA. The SBD1 stretch occupies residues 282–351 (DLAAMMDLVE…AKLPGAVLGQ (70 aa)). Residues Ala-329, Gln-351, Gly-352, Thr-356, and Met-364 each contribute to the (E)-4-coumaroyl-AMP site. Gln-351, Gly-352, and Thr-356 together coordinate ATP. An SBD2 region spans residues 352–419 (GYGMTEAGPV…IRGQQIMKGY (68 aa)). ATP-binding residues include Asp-440 and Arg-455. Positions 457 and 461 each coordinate (E)-4-coumaroyl-AMP. CoA is bound by residues Arg-463 and Gly-464. Lys-547 is a binding site for ATP.

It belongs to the ATP-dependent AMP-binding enzyme family. It depends on Mg(2+) as a cofactor. In terms of tissue distribution, expressed in roots, stems, leaf blades and leaf sheaths.

The catalysed reaction is (E)-ferulate + ATP + CoA = (E)-feruloyl-CoA + AMP + diphosphate. It catalyses the reaction (E)-4-coumarate + ATP + CoA = (E)-4-coumaroyl-CoA + AMP + diphosphate. It carries out the reaction (E)-cinnamate + ATP + CoA = (E)-cinnamoyl-CoA + AMP + diphosphate. The enzyme catalyses (E)-caffeate + ATP + CoA = (E)-caffeoyl-CoA + AMP + diphosphate. The catalysed reaction is (E)-ferulate + ATP + H(+) = (E)-feruloyl-AMP + diphosphate. It catalyses the reaction (E)-feruloyl-AMP + CoA = (E)-feruloyl-CoA + AMP + H(+). It carries out the reaction (E)-4-coumarate + ATP + H(+) = (E)-4-coumaroyl-AMP + diphosphate. The enzyme catalyses (E)-4-coumaroyl-AMP + CoA = (E)-4-coumaroyl-CoA + AMP + H(+). The catalysed reaction is (E)-caffeate + ATP + H(+) = (E)-caffeoyl-AMP + diphosphate. It catalyses the reaction (E)-caffeoyl-AMP + CoA = (E)-caffeoyl-CoA + AMP + H(+). The protein operates within phytoalexin biosynthesis; 3,4',5-trihydroxystilbene biosynthesis; 3,4',5-trihydroxystilbene from trans-4-coumarate: step 1/2. In terms of biological role, involved in the phenylpropanoid metabolism by mediating the activation of a number of hydroxycinnamates for the biosynthesis of monolignols and other phenolic secondary metabolites. Catalyzes the formation of CoA esters of cinnamate, 4-coumarate, caffeate and ferulate. Is more efficient with substrates in the following order: ferulate &gt; 4-coumarate &gt; cinnamate &gt; caffeate. Cannot convert sinapate to its corresponding CoA ester. Follows a two-step reaction mechanism, wherein the carboxylate substrate first undergoes adenylation by ATP, followed by a thioesterification in the presence of CoA to yield the final CoA thioester. This is 4-coumarate--CoA ligase 1 from Oryza sativa subsp. japonica (Rice).